The following is a 403-amino-acid chain: Putative transport protein TP_0553 (403 aa).

Transmembrane regions (helical) follow at residues 10 to 30 (ISLF…FVPY), 31 to 51 (LTVL…YRAL), 92 to 112 (AAVF…FIAI), 202 to 222 (LYFF…ALPL), 243 to 263 (KGLF…YGIF), 271 to 291 (LAML…CVWL), 293 to 313 (VGIS…LFVA), and 350 to 370 (TFGF…FTVI).

This sequence belongs to the autoinducer-2 exporter (AI-2E) (TC 2.A.86) family.

The protein resides in the cell membrane. The sequence is that of Putative transport protein TP_0553 from Treponema pallidum (strain Nichols).